The primary structure comprises 162 residues: MSLVTQILLNADDELRYPTSGELETIKSFLKTGNKRISIINNIAQNEKKIIEQASKQLWQVHPEYISPGGNAYGARQRSLCLRDYGWYLRLVTYGILAGDQRPIEKIGIIGVREMYNSLGVPVIGMVDSITALKNSTLSVLSPEDSEEVKPYFDYIIQAMAA.

N71 is modified (N4-methylasparagine). C81 lines the (2R,3E)-phycocyanobilin pocket.

It belongs to the phycobiliprotein family. Contains one covalently linked phycocyanobilin chromophore.

The protein resides in the plastid. Its subcellular location is the cyanelle thylakoid membrane. Its function is as follows. Allophycocyanin is a photosynthetic bile pigment-protein complex with maximum absorption at approximately 650 nanometers. This Cyanophora paradoxa protein is Allophycocyanin alpha-B chain (apcD).